The primary structure comprises 317 residues: Ribosomal protein L11 methyltransferase (317 aa).

S-adenosyl-L-methionine is bound by residues T158, G179, D201, and N244.

Belongs to the methyltransferase superfamily. PrmA family.

The protein localises to the cytoplasm. The enzyme catalyses L-lysyl-[protein] + 3 S-adenosyl-L-methionine = N(6),N(6),N(6)-trimethyl-L-lysyl-[protein] + 3 S-adenosyl-L-homocysteine + 3 H(+). Methylates ribosomal protein L11. The sequence is that of Ribosomal protein L11 methyltransferase from Lactococcus lactis subsp. cremoris (strain SK11).